The chain runs to 648 residues: Zinc finger protein grt1 (648 aa).

Residues 13-42 (ACENCRKRKVKCSGGDVCFECQKYNENCVY) constitute a DNA-binding region (zn(2)-C6 fungal-type).

In terms of assembly, monomer.

It localises to the nucleus. In terms of biological role, may be involved in the facilitation of anaphase progression in mitosis. The sequence is that of Zinc finger protein grt1 (grt1) from Schizosaccharomyces pombe (strain 972 / ATCC 24843) (Fission yeast).